Reading from the N-terminus, the 238-residue chain is Sugar fermentation stimulation protein homolog (238 aa).

Belongs to the SfsA family.

The sequence is that of Sugar fermentation stimulation protein homolog from Haemophilus influenzae (strain ATCC 51907 / DSM 11121 / KW20 / Rd).